The primary structure comprises 147 residues: Large-conductance mechanosensitive channel (147 aa).

Transmembrane regions (helical) follow at residues 14–34 (VVDM…VKSL) and 85–105 (FGLF…LFMI).

The protein belongs to the MscL family. In terms of assembly, homopentamer.

The protein resides in the cell inner membrane. Its function is as follows. Channel that opens in response to stretch forces in the membrane lipid bilayer. May participate in the regulation of osmotic pressure changes within the cell. The protein is Large-conductance mechanosensitive channel of Tolumonas auensis (strain DSM 9187 / NBRC 110442 / TA 4).